Reading from the N-terminus, the 365-residue chain is Isoflavone 4'-O-methyltransferase (365 aa).

S-adenosyl-L-methionine contacts are provided by residues 207-210 (VAGG), Asp231, 231-232 (DQ), 251-252 (DM), and Lys265. The active-site Proton acceptor is the His269.

This sequence belongs to the class I-like SAM-binding methyltransferase superfamily. Cation-independent O-methyltransferase family. COMT subfamily.

The enzyme catalyses a 4'-hydroxyisoflavone + S-adenosyl-L-methionine = a 4'-methoxyisoflavone + S-adenosyl-L-homocysteine + H(+). The catalysed reaction is (2R,3S)-2,4',7-trihydroxyisoflavanone + S-adenosyl-L-methionine = (2R,3S)-2,7-dihydroxy-4'-methoxyisoflavanone + S-adenosyl-L-homocysteine + H(+). Functionally, 2-hydroxyisoflavanone 4'-O-methyltransferase involved in the biosynthesis of formononetin. Can use 2,7,4'-trihydroxyisoflavanone as substrate, but not daidzein. This chain is Isoflavone 4'-O-methyltransferase (HI4'OMT), found in Lotus japonicus (Lotus corniculatus var. japonicus).